A 303-amino-acid chain; its full sequence is Signal recognition particle receptor FtsY (303 aa).

Residues 108 to 115 (GVNGAGKT), 190 to 194 (DTAGR), and 254 to 257 (TKLD) contribute to the GTP site.

Belongs to the GTP-binding SRP family. FtsY subfamily. Part of the signal recognition particle protein translocation system, which is composed of SRP and FtsY. SRP is a ribonucleoprotein composed of Ffh and a 4.5S RNA molecule.

The protein localises to the cell inner membrane. It localises to the cytoplasm. It catalyses the reaction GTP + H2O = GDP + phosphate + H(+). In terms of biological role, involved in targeting and insertion of nascent membrane proteins into the cytoplasmic membrane. Acts as a receptor for the complex formed by the signal recognition particle (SRP) and the ribosome-nascent chain (RNC). Interaction with SRP-RNC leads to the transfer of the RNC complex to the Sec translocase for insertion into the membrane, the hydrolysis of GTP by both Ffh and FtsY, and the dissociation of the SRP-FtsY complex into the individual components. The sequence is that of Signal recognition particle receptor FtsY from Rickettsia conorii (strain ATCC VR-613 / Malish 7).